A 165-amino-acid polypeptide reads, in one-letter code: Large ribosomal subunit protein uL10 (165 aa).

The protein belongs to the universal ribosomal protein uL10 family. As to quaternary structure, part of the ribosomal stalk of the 50S ribosomal subunit. The N-terminus interacts with L11 and the large rRNA to form the base of the stalk. The C-terminus forms an elongated spine to which L12 dimers bind in a sequential fashion forming a multimeric L10(L12)X complex.

In terms of biological role, forms part of the ribosomal stalk, playing a central role in the interaction of the ribosome with GTP-bound translation factors. The chain is Large ribosomal subunit protein uL10 from Cronobacter sakazakii (strain ATCC BAA-894) (Enterobacter sakazakii).